We begin with the raw amino-acid sequence, 374 residues long: Ribosomal RNA large subunit methyltransferase G (374 aa).

Belongs to the methyltransferase superfamily. RlmG family.

Its subcellular location is the cytoplasm. It carries out the reaction guanosine(1835) in 23S rRNA + S-adenosyl-L-methionine = N(2)-methylguanosine(1835) in 23S rRNA + S-adenosyl-L-homocysteine + H(+). Specifically methylates the guanine in position 1835 (m2G1835) of 23S rRNA. In Pseudomonas paraeruginosa (strain DSM 24068 / PA7) (Pseudomonas aeruginosa (strain PA7)), this protein is Ribosomal RNA large subunit methyltransferase G.